A 337-amino-acid chain; its full sequence is Holliday junction branch migration complex subunit RuvB (337 aa).

The segment at 4 to 184 is large ATPase domain (RuvB-L); the sequence is ADRLIAPAAI…FGIVQRLEFY (181 aa). Residues Ile-23, Arg-24, Gly-65, Lys-68, Thr-69, Thr-70, 131–133, Arg-174, Tyr-184, and Arg-221 contribute to the ATP site; that span reads EDY. Mg(2+) is bound at residue Thr-69. The small ATPAse domain (RuvB-S) stretch occupies residues 185-255; that stretch reads KVEDLAHIVG…IAAQALDMLD (71 aa). The interval 258–337 is head domain (RuvB-H); that stretch reads NAGFDYMDRK…FGLTTPERQG (80 aa). DNA-binding residues include Arg-313 and Arg-318.

The protein belongs to the RuvB family. Homohexamer. Forms an RuvA(8)-RuvB(12)-Holliday junction (HJ) complex. HJ DNA is sandwiched between 2 RuvA tetramers; dsDNA enters through RuvA and exits via RuvB. An RuvB hexamer assembles on each DNA strand where it exits the tetramer. Each RuvB hexamer is contacted by two RuvA subunits (via domain III) on 2 adjacent RuvB subunits; this complex drives branch migration. In the full resolvosome a probable DNA-RuvA(4)-RuvB(12)-RuvC(2) complex forms which resolves the HJ.

The protein localises to the cytoplasm. The catalysed reaction is ATP + H2O = ADP + phosphate + H(+). Its function is as follows. The RuvA-RuvB-RuvC complex processes Holliday junction (HJ) DNA during genetic recombination and DNA repair, while the RuvA-RuvB complex plays an important role in the rescue of blocked DNA replication forks via replication fork reversal (RFR). RuvA specifically binds to HJ cruciform DNA, conferring on it an open structure. The RuvB hexamer acts as an ATP-dependent pump, pulling dsDNA into and through the RuvAB complex. RuvB forms 2 homohexamers on either side of HJ DNA bound by 1 or 2 RuvA tetramers; 4 subunits per hexamer contact DNA at a time. Coordinated motions by a converter formed by DNA-disengaged RuvB subunits stimulates ATP hydrolysis and nucleotide exchange. Immobilization of the converter enables RuvB to convert the ATP-contained energy into a lever motion, pulling 2 nucleotides of DNA out of the RuvA tetramer per ATP hydrolyzed, thus driving DNA branch migration. The RuvB motors rotate together with the DNA substrate, which together with the progressing nucleotide cycle form the mechanistic basis for DNA recombination by continuous HJ branch migration. Branch migration allows RuvC to scan DNA until it finds its consensus sequence, where it cleaves and resolves cruciform DNA. This Tolumonas auensis (strain DSM 9187 / NBRC 110442 / TA 4) protein is Holliday junction branch migration complex subunit RuvB.